The following is a 346-amino-acid chain: NADH-quinone oxidoreductase subunit H 2 (346 aa).

8 helical membrane-spanning segments follow: residues 14–34 (IAMV…VAYA), 83–103 (FAFL…FAVI), 136–156 (VGVL…VLAG), 172–192 (SAQM…VFML), 208–228 (GAWY…CSIA), 260–280 (FFMA…TLFL), 289–309 (LPGW…CMWI), and 324–344 (LGWK…GIIV).

The protein belongs to the complex I subunit 1 family. In terms of assembly, NDH-1 is composed of 14 different subunits. Subunits NuoA, H, J, K, L, M, N constitute the membrane sector of the complex.

It is found in the cell inner membrane. The catalysed reaction is a quinone + NADH + 5 H(+)(in) = a quinol + NAD(+) + 4 H(+)(out). In terms of biological role, NDH-1 shuttles electrons from NADH, via FMN and iron-sulfur (Fe-S) centers, to quinones in the respiratory chain. The immediate electron acceptor for the enzyme in this species is believed to be ubiquinone. Couples the redox reaction to proton translocation (for every two electrons transferred, four hydrogen ions are translocated across the cytoplasmic membrane), and thus conserves the redox energy in a proton gradient. This subunit may bind ubiquinone. This is NADH-quinone oxidoreductase subunit H 2 from Geobacter metallireducens (strain ATCC 53774 / DSM 7210 / GS-15).